Here is a 251-residue protein sequence, read N- to C-terminus: Triosephosphate isomerase (251 aa).

Position 9–11 (9–11) interacts with substrate; sequence NWK. H94 acts as the Electrophile in catalysis. Catalysis depends on E163, which acts as the Proton acceptor. Residues G169, S209, and 230–231 contribute to the substrate site; that span reads GG.

It belongs to the triosephosphate isomerase family. In terms of assembly, homodimer.

It localises to the cytoplasm. The catalysed reaction is D-glyceraldehyde 3-phosphate = dihydroxyacetone phosphate. The protein operates within carbohydrate biosynthesis; gluconeogenesis. It functions in the pathway carbohydrate degradation; glycolysis; D-glyceraldehyde 3-phosphate from glycerone phosphate: step 1/1. Its function is as follows. Involved in the gluconeogenesis. Catalyzes stereospecifically the conversion of dihydroxyacetone phosphate (DHAP) to D-glyceraldehyde-3-phosphate (G3P). The polypeptide is Triosephosphate isomerase (Dehalococcoides mccartyi (strain ATCC BAA-2266 / KCTC 15142 / 195) (Dehalococcoides ethenogenes (strain 195))).